The following is a 301-amino-acid chain: Zinc finger protein LEE1 (301 aa).

Residues 1 to 25 form a disordered region; the sequence is MDAFENMSVSNHPGGNARRNSQSAN. Over residues 7–25 the composition is skewed to polar residues; it reads MSVSNHPGGNARRNSQSAN. A phosphoserine mark is found at S21 and S30. C3H1-type zinc fingers lie at residues 87–114 and 123–145; these read DYSH…HSPD and PCKY…HVLP. At S282 the chain carries Phosphoserine.

The sequence is that of Zinc finger protein LEE1 (LEE1) from Saccharomyces cerevisiae (strain ATCC 204508 / S288c) (Baker's yeast).